The primary structure comprises 199 residues: Peptidyl-prolyl cis-trans isomerase CYP22 (199 aa).

One can recognise a PPIase cyclophilin-type domain in the interval 35–198 (FFDVSIGGIP…LAVVITECGE (164 aa)).

Belongs to the cyclophilin-type PPIase family. Ubiquitous.

It catalyses the reaction [protein]-peptidylproline (omega=180) = [protein]-peptidylproline (omega=0). PPIases accelerate the folding of proteins. It catalyzes the cis-trans isomerization of proline imidic peptide bonds in oligopeptides. The sequence is that of Peptidyl-prolyl cis-trans isomerase CYP22 (CYP22) from Arabidopsis thaliana (Mouse-ear cress).